Reading from the N-terminus, the 23-residue chain is Caerin-4.2 (23 aa).

In terms of tissue distribution, expressed by the skin parotoid and/or rostral glands.

The protein localises to the secreted. Its function is as follows. Antibacterial peptide, that adopts an alpha helical conformation which can disrupt bacterial membranes. Each caerin displays a different antimicrobial specificity. This chain is Caerin-4.2, found in Ranoidea caerulea (Green tree frog).